An 89-amino-acid chain; its full sequence is Putative protein T-ENOL (89 aa).

Disordered regions lie at residues 1 to 31 (MASTSARSGDKKDTWPIQAAASLGGGQKASL) and 54 to 89 (RSHMNPMPDKEKQTKDQGTQISRHVFFTKTRGTDTR).

In terms of tissue distribution, specifically expressed in testis (at protein level).

The polypeptide is Putative protein T-ENOL (Rattus norvegicus (Rat)).